The primary structure comprises 189 residues: Ribosome maturation factor RimP (189 aa).

Belongs to the RimP family.

The protein localises to the cytoplasm. Functionally, required for maturation of 30S ribosomal subunits. This Corynebacterium kroppenstedtii (strain DSM 44385 / JCM 11950 / CIP 105744 / CCUG 35717) protein is Ribosome maturation factor RimP.